Consider the following 353-residue polypeptide: Quinolinate synthase (353 aa).

His47 and Ser68 together coordinate iminosuccinate. Cys113 provides a ligand contact to [4Fe-4S] cluster. Iminosuccinate-binding positions include 139–141 and Ser156; that span reads YAN. Position 200 (Cys200) interacts with [4Fe-4S] cluster. Iminosuccinate contacts are provided by residues 226-228 and Thr243; that span reads HPE. Cys297 is a binding site for [4Fe-4S] cluster.

It belongs to the quinolinate synthase family. Type 1 subfamily. [4Fe-4S] cluster serves as cofactor.

It localises to the cytoplasm. It carries out the reaction iminosuccinate + dihydroxyacetone phosphate = quinolinate + phosphate + 2 H2O + H(+). Its pathway is cofactor biosynthesis; NAD(+) biosynthesis; quinolinate from iminoaspartate: step 1/1. Its function is as follows. Catalyzes the condensation of iminoaspartate with dihydroxyacetone phosphate to form quinolinate. This is Quinolinate synthase from Pectobacterium carotovorum subsp. carotovorum (strain PC1).